A 701-amino-acid chain; its full sequence is Methionine--tRNA ligase (701 aa).

The short motif at 13–23 is the 'HIGH' region element; it reads PYANGSIHLGH. Positions 144, 147, 157, and 160 each coordinate Zn(2+). Positions 336 to 340 match the 'KMSKS' region motif; the sequence is KMSKS. Position 339 (K339) interacts with ATP. The tRNA-binding domain occupies 600–701; the sequence is DFSKIDLRIA…SGAQPGMRVK (102 aa).

The protein belongs to the class-I aminoacyl-tRNA synthetase family. MetG type 1 subfamily. In terms of assembly, homodimer. The cofactor is Zn(2+).

Its subcellular location is the cytoplasm. It catalyses the reaction tRNA(Met) + L-methionine + ATP = L-methionyl-tRNA(Met) + AMP + diphosphate. Is required not only for elongation of protein synthesis but also for the initiation of all mRNA translation through initiator tRNA(fMet) aminoacylation. The sequence is that of Methionine--tRNA ligase from Nitrosomonas eutropha (strain DSM 101675 / C91 / Nm57).